We begin with the raw amino-acid sequence, 144 residues long: MKMWLNWVFLLTLLHGIQCEVKVVESGGGLVQPGGSLRLSCATSGFTFSDFYMEWVRQTPGKRLEWIAASRSKAHDYRTEYSASVKGRFIVSRDTSQSVLYLQMNALRAEDTATYYCTRDADYGNSYFGYFDVWGAGTTVTVSS.

Positions 1 to 19 (MKMWLNWVFLLTLLHGIQC) are cleaved as a signal peptide. An Ig-like domain is found at 20–133 (EVKVVESGGG…GNSYFGYFDV (114 aa)).

The polypeptide is Ig heavy chain V region M167 (Mus musculus (Mouse)).